A 345-amino-acid chain; its full sequence is Endochitinase 4 (345 aa).

An N-terminal signal peptide occupies residues 1–27 (MAPLLNTGLVILPLIVSTLLGPMPAFA). 2 N-linked (GlcNAc...) asparagine glycosylation sites follow: N29 and N89. The GH18 domain occupies 41-345 (KVLQGYWENW…TFGDNVKGRL (305 aa)). E163 (proton donor) is an active-site residue. The N-linked (GlcNAc...) asparagine glycan is linked to N316.

The protein belongs to the glycosyl hydrolase 18 family. Chitinase class V subfamily.

The protein localises to the secreted. The catalysed reaction is Random endo-hydrolysis of N-acetyl-beta-D-glucosaminide (1-&gt;4)-beta-linkages in chitin and chitodextrins.. Secreted chitinase involved in the degradation of chitin, a component of the cell walls of fungi and exoskeletal elements of some animals (including worms and arthropods). Participates in the infection process and directly acts in the penetration process of the host cuticle. The polypeptide is Endochitinase 4 (chi4) (Metarhizium robertsii (strain ARSEF 23 / ATCC MYA-3075) (Metarhizium anisopliae (strain ARSEF 23))).